Reading from the N-terminus, the 477-residue chain is Probable periplasmic serine endoprotease DegP-like (477 aa).

Positions 1 to 27 (MSIPRLKSYLMMFAAVLMLGQVLTAQA) are cleaved as a signal peptide. Residues His117, Asp147, and Ser220 each act as charge relay system in the active site. Residues 218–220 (GNS) and 275–279 (LGVVI) contribute to the substrate site. PDZ domains lie at 264–355 (LKKD…IRNG) and 361–466 (DISV…LRQG).

Belongs to the peptidase S1C family.

It localises to the periplasm. It carries out the reaction Acts on substrates that are at least partially unfolded. The cleavage site P1 residue is normally between a pair of hydrophobic residues, such as Val-|-Val.. Functionally, might be efficient in the degradation of transiently denatured and unfolded proteins which accumulate in the periplasm following stress conditions. This is Probable periplasmic serine endoprotease DegP-like from Pseudomonas putida (strain ATCC 700007 / DSM 6899 / JCM 31910 / BCRC 17059 / LMG 24140 / F1).